We begin with the raw amino-acid sequence, 1017 residues long: Probable beta-galactosidase B (1017 aa).

Positions 1 to 20 (MTRITKLCVLLLSSIGLLAA) are cleaved as a signal peptide. The N-linked (GlcNAc...) asparagine glycan is linked to Asn-23. Residue Tyr-90 participates in substrate binding. N-linked (GlcNAc...) asparagine glycosylation occurs at Asn-100. Asn-135, Ala-136, and Glu-137 together coordinate substrate. An N-linked (GlcNAc...) asparagine glycan is attached at Asn-158. A substrate-binding site is contributed by Asn-195. Catalysis depends on Glu-196, which acts as the Proton donor. N-linked (GlcNAc...) asparagine glycosylation is present at Asn-211. Tyr-265 contacts substrate. Cys-271 and Cys-324 form a disulfide bridge. Catalysis depends on Glu-308, which acts as the Nucleophile. Tyr-373 lines the substrate pocket. Residues Asn-411, Asn-417, Asn-456, Asn-628, Asn-681, Asn-737, Asn-770, Asn-777, Asn-785, Asn-828, and Asn-829 are each glycosylated (N-linked (GlcNAc...) asparagine).

The protein belongs to the glycosyl hydrolase 35 family.

Its subcellular location is the secreted. It carries out the reaction Hydrolysis of terminal non-reducing beta-D-galactose residues in beta-D-galactosides.. In terms of biological role, cleaves beta-linked terminal galactosyl residues from gangliosides, glycoproteins, and glycosaminoglycans. The chain is Probable beta-galactosidase B (lacB) from Aspergillus niger (strain ATCC MYA-4892 / CBS 513.88 / FGSC A1513).